A 332-amino-acid chain; its full sequence is Ketol-acid reductoisomerase (NADP(+)) (332 aa).

Residues 5-185 (VKVYYDDEVS…GCTRAGVIET (181 aa)) enclose the KARI N-terminal Rossmann domain. NADP(+)-binding positions include 28–31 (YGNQ), arginine 51, serine 56, and 86–89 (DLVQ). Residue histidine 111 is part of the active site. Residue glycine 137 participates in NADP(+) binding. The KARI C-terminal knotted domain maps to 186–331 (TFKDETESDL…RFIRKMSGLE (146 aa)). Residues aspartate 194, glutamate 198, glutamate 230, and glutamate 234 each contribute to the Mg(2+) site. Serine 255 is a binding site for substrate.

It belongs to the ketol-acid reductoisomerase family. Requires Mg(2+) as cofactor.

The enzyme catalyses (2R)-2,3-dihydroxy-3-methylbutanoate + NADP(+) = (2S)-2-acetolactate + NADPH + H(+). It carries out the reaction (2R,3R)-2,3-dihydroxy-3-methylpentanoate + NADP(+) = (S)-2-ethyl-2-hydroxy-3-oxobutanoate + NADPH + H(+). Its pathway is amino-acid biosynthesis; L-isoleucine biosynthesis; L-isoleucine from 2-oxobutanoate: step 2/4. It functions in the pathway amino-acid biosynthesis; L-valine biosynthesis; L-valine from pyruvate: step 2/4. Functionally, involved in the biosynthesis of branched-chain amino acids (BCAA). Catalyzes an alkyl-migration followed by a ketol-acid reduction of (S)-2-acetolactate (S2AL) to yield (R)-2,3-dihydroxy-isovalerate. In the isomerase reaction, S2AL is rearranged via a Mg-dependent methyl migration to produce 3-hydroxy-3-methyl-2-ketobutyrate (HMKB). In the reductase reaction, this 2-ketoacid undergoes a metal-dependent reduction by NADPH to yield (R)-2,3-dihydroxy-isovalerate. The sequence is that of Ketol-acid reductoisomerase (NADP(+)) from Pyrococcus abyssi (strain GE5 / Orsay).